A 41-amino-acid polypeptide reads, in one-letter code: Cytochrome b559 subunit beta (41 aa).

Residues Trp16–Ala32 form a helical membrane-spanning segment. Heme is bound at residue His20.

The protein belongs to the PsbE/PsbF family. In terms of assembly, heterodimer of an alpha subunit and a beta subunit. PSII is composed of 1 copy each of membrane proteins PsbA, PsbB, PsbC, PsbD, PsbE, PsbF, PsbH, PsbI, PsbJ, PsbK, PsbL, PsbM, PsbT, PsbX, PsbY, PsbZ, Psb30/Ycf12, at least 3 peripheral proteins of the oxygen-evolving complex and a large number of cofactors. It forms dimeric complexes. The cofactor is heme b.

It is found in the plastid. The protein localises to the chloroplast thylakoid membrane. Functionally, this b-type cytochrome is tightly associated with the reaction center of photosystem II (PSII). PSII is a light-driven water:plastoquinone oxidoreductase that uses light energy to abstract electrons from H(2)O, generating O(2) and a proton gradient subsequently used for ATP formation. It consists of a core antenna complex that captures photons, and an electron transfer chain that converts photonic excitation into a charge separation. This is Cytochrome b559 subunit beta from Chlorella vulgaris (Green alga).